Consider the following 515-residue polypeptide: MVQPYKHEPFTDFTVEANKKAFEEGLKTVQAYLGQDYPLVIGGERVMTEDKIVSINPANKTEVVGRVAKANKDLAEKAMQTADAAFKWWSKTKPEMRADILFRAAAIVRRRKHEFSALLVKEAGKPWKEADADTAEAIDFMEYYARQMLKLKDGIPVESRPGETNRFFYIPLGVGVVISPWNFPFAIMAGTTVAALVTGNTVLLKPASATPVVAYKFVEVLEEAGLPAGVLNYIPGSGAEVGDYLVDHPRTRFISFTGSRDVGIRIYERAAKVHPGQIWLKRVIAEMGGKDTIVVDKEADLELAAQSIVASAFGFSGQKCSACSRVVALEDVYDQVLNRVVELTKQLKVGNPEEQSTFMGPVIDQSAYNKIMEYIEIGKQEGKLMTGGEGDDSKGFFIQPTVFADLDPKARIMQEEIFGPVVAFTKAKDFDHALEIANNTEYGLTGAVISNNRFNLEKAREEFHVGNLYFNRGCTGAIVGYHPFGGFNMSGTDSKAGGPDYLLLHMQAKTVSEMF.

Residues Glu286 and Cys320 contribute to the active site.

Belongs to the aldehyde dehydrogenase family. RocA subfamily.

It catalyses the reaction L-glutamate 5-semialdehyde + NAD(+) + H2O = L-glutamate + NADH + 2 H(+). Its pathway is amino-acid degradation; L-proline degradation into L-glutamate; L-glutamate from L-proline: step 2/2. The polypeptide is 1-pyrroline-5-carboxylate dehydrogenase (Anoxybacillus flavithermus (strain DSM 21510 / WK1)).